An 89-amino-acid polypeptide reads, in one-letter code: Large ribosomal subunit protein bL27 (89 aa).

Residues Met1 to Gly22 are disordered.

Belongs to the bacterial ribosomal protein bL27 family.

The chain is Large ribosomal subunit protein bL27 from Gluconacetobacter diazotrophicus (strain ATCC 49037 / DSM 5601 / CCUG 37298 / CIP 103539 / LMG 7603 / PAl5).